A 189-amino-acid polypeptide reads, in one-letter code: Large ribosomal subunit protein eL18 (189 aa).

Belongs to the eukaryotic ribosomal protein eL18 family.

The protein resides in the cytoplasm. The sequence is that of Large ribosomal subunit protein eL18 (RpL18) from Aedes aegypti (Yellowfever mosquito).